Consider the following 338-residue polypeptide: Fructose-1,6-bisphosphatase class 1 1 (338 aa).

Residues Glu-91, Asp-113, Leu-115, and Asp-116 each coordinate Mg(2+). Substrate-binding positions include 116–119 (DGSS), Asn-208, and Lys-274. Mg(2+) is bound at residue Glu-280.

This sequence belongs to the FBPase class 1 family. Homotetramer. Mg(2+) is required as a cofactor.

The protein resides in the cytoplasm. It carries out the reaction beta-D-fructose 1,6-bisphosphate + H2O = beta-D-fructose 6-phosphate + phosphate. The protein operates within carbohydrate biosynthesis; gluconeogenesis. The polypeptide is Fructose-1,6-bisphosphatase class 1 1 (Cupriavidus necator (strain ATCC 17699 / DSM 428 / KCTC 22496 / NCIMB 10442 / H16 / Stanier 337) (Ralstonia eutropha)).